Consider the following 278-residue polypeptide: MSRSSPDQLTRFLAQVQGRPKKGLSQNFLIDGNILRKILAVSCVEAGDWVLEIGPGFGALTEVLVNQGAHVVALEKDPMFEETLKQLPIDLEITDACKYPLSQLEEKGWQGKGRVVANLPYHITTPLLTKLFLEVPNQWKTVTVMMQDEVARRITAQPGGKEYGSLTIFLQFFADVRYAFKVSPGCFFPKPQVSSAVVHMTVKETFPLETSLHQKFFSLTRAAFGQRRKLLANALKDLYPKELVFSALNQLNFSEKTRPETLSLNEYLQLFHLLSSNA.

Residues Asn-27, Leu-29, Gly-54, Glu-75, Asp-95, and Asn-118 each contribute to the S-adenosyl-L-methionine site.

The protein belongs to the class I-like SAM-binding methyltransferase superfamily. rRNA adenine N(6)-methyltransferase family. RsmA subfamily.

The protein resides in the cytoplasm. It carries out the reaction adenosine(1518)/adenosine(1519) in 16S rRNA + 4 S-adenosyl-L-methionine = N(6)-dimethyladenosine(1518)/N(6)-dimethyladenosine(1519) in 16S rRNA + 4 S-adenosyl-L-homocysteine + 4 H(+). Functionally, specifically dimethylates two adjacent adenosines (A1518 and A1519) in the loop of a conserved hairpin near the 3'-end of 16S rRNA in the 30S particle. May play a critical role in biogenesis of 30S subunits. The protein is Ribosomal RNA small subunit methyltransferase A of Chlamydia caviae (strain ATCC VR-813 / DSM 19441 / 03DC25 / GPIC) (Chlamydophila caviae).